We begin with the raw amino-acid sequence, 135 residues long: MLSPKRTRFRKQHRGRLKGISSRGNRICFGRYALQTLEPAWITSRQIEAGRRAMTRNVRRGGKIWVRIFPDKPVTVRPAETRMGSGKGSPEYWVAVVKPGKILYEMGGVPENIARKAISIAASKMPIKTQFIISE.

The protein belongs to the universal ribosomal protein uL16 family. Part of the 50S ribosomal subunit.

The protein resides in the plastid. Its subcellular location is the chloroplast. In Olimarabidopsis pumila (Dwarf rocket), this protein is Large ribosomal subunit protein uL16c.